The sequence spans 343 residues: Glucan endo-1,3-beta-glucosidase, acidic isoform GI9 (343 aa).

Positions 1 to 29 are cleaved as a signal peptide; sequence MTLCIKNGFLAAALVLVGLLICSIQMIGA. Residue glutamine 30 is modified to Pyrrolidone carboxylic acid. The active-site Proton donor is the glutamate 124. Catalysis depends on glutamate 264, which acts as the Nucleophile.

Belongs to the glycosyl hydrolase 17 family.

The protein resides in the secreted. It localises to the extracellular space. The enzyme catalyses Hydrolysis of (1-&gt;3)-beta-D-glucosidic linkages in (1-&gt;3)-beta-D-glucans.. In terms of biological role, implicated in the defense of plants against pathogens. The sequence is that of Glucan endo-1,3-beta-glucosidase, acidic isoform GI9 (PR2) from Nicotiana tabacum (Common tobacco).